Consider the following 348-residue polypeptide: MIDTIEKEDTIISEEEAAQYDRQIRLWGLDAQKRLRGSRVLLVGLRGLGAEVAKNLILAGVKGLTLLDHEQVTEESRRAQFLIPVDADGQNHAQASLERAQFLNPMVEVKADTEPVESKPDDFFFQFDAVCLTRCSRDLMVRVDQLCASRNIKVFCGDVYGYNGYMFSDLGQEYHYVEEKPKVVKGSNEANDGPEAKKPKIDPNETTMVKKTISFCSLKEALEVDWTTEKAKSSLKRIPADYFLLQVLLKFRTDKGRDPQPDSFAEDSQLLLQIRDDVLETMGLSSDLLPNTFVSYCFSEMSPVCAVVGGVLGQEIVKALSQRDAPHRNFFFFDGLKGSGVVDYFSSK.

The protein belongs to the ubiquitin-activating E1 family. Heterodimer of sae1 and uba2/sae2. The heterodimer corresponds to the two domains that are encoded on a single polypeptide chain in ubiquitin-activating enzyme E1. Interacts with ube2i.

It localises to the nucleus. Its pathway is protein modification; protein sumoylation. Its function is as follows. The heterodimer acts as an E1 ligase for sumo1, sumo2, and sumo3. It mediates ATP-dependent activation of sumo proteins followed by formation of a thioester bond between a sumo protein and a conserved active site cysteine residue on uba2/sae2. The protein is SUMO-activating enzyme subunit 1 (sae1) of Danio rerio (Zebrafish).